A 146-amino-acid chain; its full sequence is Large ribosomal subunit protein uL11 (146 aa).

Belongs to the universal ribosomal protein uL11 family. Part of the ribosomal stalk of the 50S ribosomal subunit. Interacts with L10 and the large rRNA to form the base of the stalk. L10 forms an elongated spine to which L12 dimers bind in a sequential fashion forming a multimeric L10(L12)X complex. In terms of processing, one or more lysine residues are methylated.

In terms of biological role, forms part of the ribosomal stalk which helps the ribosome interact with GTP-bound translation factors. This chain is Large ribosomal subunit protein uL11, found in Buchnera aphidicola subsp. Baizongia pistaciae (strain Bp).